Here is a 350-residue protein sequence, read N- to C-terminus: MSTVQTVLGTITPNLLGRTLTHEHVALDFEHFYRPPPPDFESELKAKISMSTLGYVRLYPYSSKENVRFYDEEALEAAKKDVLLYKKHGGGSIVENSSYGLKRNLEFIVELAKSTGVHFIAGTGHYIHAMQDASHASLTVEQMSDLYSKDIITGQQVNGQMVKCGFIGEVASVYPIHDFEKNAIKAAGEIQEVLGCGVSMHPHRVTKAPFEIMRLYLEAGGRADKCVMSHLDRTIFDIDELLEFAKLGCYIQYDLFGTECSFYQLNTSVDMISDGQRIDNLIKLIKEGLVDKLLMSHDIHTKHRLTSYGGHGYHHIHTNILPRMFDRGVTLEQVEQMTVTNPANWLAFDP.

A divalent metal cation-binding residues include His22, His24, Glu169, His201, His230, and Asp298.

This sequence belongs to the metallo-dependent hydrolases superfamily. Phosphotriesterase family. It depends on a divalent metal cation as a cofactor.

This Drosophila yakuba (Fruit fly) protein is Phosphotriesterase-related protein.